The chain runs to 488 residues: MELSLTTSIALATIVLILYKLATRPKSNKKRLPEASRLPIIGHMHHLIGTMPHRGVMELARKHGSLMHLQLGEVSTIVVSSPKWAKEILTTYDITFANRPETLTGEIIAYHNTDIVLAPYGEYWRQLRKLCTLELLSVKKVKSFQSIREEECWNLVKEVKESGSGKPISLSESIFKMIATILSRAAFGKGIKDQREFTEIVKEILRQTGGFDVADIFPSKKFLHHLSGKRARLTSIHKKLDTLINNIVAEHHVSTSSKANETLLDVLLRLKDSAEFPLTADNVKAIILDMFGAGTDTSSATVEWAISELIRCPRAMEKVQAELRQALNGKEQIHEEDIQDLPYLNLVIRETLRLHPPLPLVMPRECREPVNLAGYEIANKTKLIVNVFAINRDPEYWKDAEAFIPERFENNPNNIMGADYEYLPFGAGRRMCPGAALGLANVQLPLANILYHFNWKLPNGASHDQLDMTESFGATVQRKTELILVPSF.

At 1 to 6 (MELSLT) the chain is on the cytoplasmic side. A helical; Signal-anchor for type II membrane protein transmembrane segment spans residues 7-23 (TSIALATIVLILYKLAT). Over 24–488 (RPKSNKKRLP…KTELILVPSF (465 aa)) the chain is Lumenal. N260 and N379 each carry an N-linked (GlcNAc...) asparagine glycan. C432 serves as a coordination point for heme.

It belongs to the cytochrome P450 family. Heme is required as a cofactor.

It localises to the endoplasmic reticulum membrane. The protein localises to the microsome membrane. The catalysed reaction is (+)-(R)-germacrene A + 3 reduced [NADPH--hemoprotein reductase] + 3 O2 = germacra-1(10),4,11(13)-trien-12-oate + 3 oxidized [NADPH--hemoprotein reductase] + 4 H2O + 4 H(+). It functions in the pathway secondary metabolite biosynthesis; terpenoid biosynthesis. With respect to regulation, inhibited by cytochrome C, miconazole, aminobenzotriazole, metyrapone and clotrimazole. Involved in the biosynthesis of germacrene-derived sesquiterpene lactones. Catalyzes three consecutive oxidations of germacrene A to produce germacrene A acid. Could also catalyze the three-step oxidation of non-natural substrate amorphadiene to artemisinic acid. Can use beta-elemene as substrate. The sequence is that of Germacrene A hydroxylase from Cichorium intybus (Chicory).